A 466-amino-acid chain; its full sequence is MTHASVVDVLTGKYAVGTTQTVKGWIRTRRDSKAGISFLAISDGSCFHPVQAVVPNTLANYENEVLRLTTACSVEVTGVVAASQGSGQAFELQATEVKVVGWVEDPDTYPMAAKRHSIEYLREQGHLRARTNMVGAVTRVRNCLSQAIHRFFHEQGYLWIAAPLITASDTEGAGEMFRVSTLDMENLPRTPAGKVDYDKDFFGKETFLTVSGQLNVETYACALSKVYTFGPTFRAENSNTSRHLAEFWMVEPEVAFADLEDNAALAEAMLKYVFNAVLAERRDDLEFFAQHVDKDAIGRLERFVASDFAQIDYTDAIEVLKNCGKKFEFPVSWGIDLSSEHERYLAEEHFKSPVVVKNYPKDIKAFYMRLNDDGKTVAAMDVLAPGIGEIIGGSQREERLDVLDARLAEMGLNKEDYWWYRDLRRYGTVPHSGFGLGFERLVVYVTGMGNVRDVIPFPRTPRTAEF.

The protein belongs to the class-II aminoacyl-tRNA synthetase family. As to quaternary structure, homodimer.

The protein resides in the cytoplasm. It carries out the reaction tRNA(Asn) + L-asparagine + ATP = L-asparaginyl-tRNA(Asn) + AMP + diphosphate + H(+). The chain is Asparagine--tRNA ligase from Aeromonas hydrophila subsp. hydrophila (strain ATCC 7966 / DSM 30187 / BCRC 13018 / CCUG 14551 / JCM 1027 / KCTC 2358 / NCIMB 9240 / NCTC 8049).